Reading from the N-terminus, the 137-residue chain is Venom allergen 4 (137 aa).

Positions Met1–Ala19 are cleaved as a signal peptide.

It belongs to the ant venom allergen 2/4 family. As to quaternary structure, monomer. Expressed by the venom gland.

It localises to the secreted. This Solenopsis invicta (Red imported fire ant) protein is Venom allergen 4.